A 380-amino-acid polypeptide reads, in one-letter code: MSDQMRIPCVIMRAGTSKGIFLKGNDLPADQELRDKVILRIFGSPDVRQIDGLAGADPLTSKLAIIGPSTHPDADVDYTFAQVSITDAVVDYNGNCGNISAGVGPFAIDESFVKAVEPMTRVCIHNTNTGKLLYAEVEVEDGKAKVSGDCKIDGVPGTNAPELMDFSDTAGAATGKVLPTGNVVDVLSTSKGDIDVSIVDVANPCIFVHAKDVNMTGTETPDVINGNADLLAYLEEIRAKCCVKIGMAATEKEASEKSPAFPMIAFVTKPEDYVDFSTGNTISGDDVDLVSRLMFMQVLHKTYAGTATACTGSAARIPGTIVNQVLRDTGDEDTVRIGHPAGVIPVVSIVKDGKVEKAALIRTARRIMEGYVYVEKAKLV.

This sequence belongs to the PrpF family. Homotetramer.

The catalysed reaction is 2-methylene-3-methylsuccinate = dimethylmaleate. It participates in cofactor degradation; nicotinate degradation; propanoate and pyruvate from 6-hydroxynicotinate: step 6/8. Its activity is regulated as follows. Inhibited by oxidized glutathione, p-chloromercuriphenylsulfonic acid and iodoacetic acid. Not inhibited by the chelating agent alpha,alpha-dipyridyl. Activity is slightly increased by EDTA. Not activated by Fe(2+), Mg(2+), Mn(2+) or Ca(2+). Unaffected by K(+), Na(+), NH4(+), Rb(+) or Li(+). Functionally, catalyzes the reversible isomerization of (R)-3-methylitaconate to 2,3-dimethylmaleate. Has very low isomerase activity with itaconate. In Eubacterium barkeri (Clostridium barkeri), this protein is 3-methylitaconate isomerase (mii).